The chain runs to 243 residues: 23S rRNA (guanosine-2'-O-)-methyltransferase RlmB (243 aa).

The S-adenosyl-L-methionine site is built by Gly196, Ile216, and Leu225.

This sequence belongs to the class IV-like SAM-binding methyltransferase superfamily. RNA methyltransferase TrmH family. RlmB subfamily. Homodimer.

It is found in the cytoplasm. It carries out the reaction guanosine(2251) in 23S rRNA + S-adenosyl-L-methionine = 2'-O-methylguanosine(2251) in 23S rRNA + S-adenosyl-L-homocysteine + H(+). Specifically methylates the ribose of guanosine 2251 in 23S rRNA. The polypeptide is 23S rRNA (guanosine-2'-O-)-methyltransferase RlmB (Salmonella typhimurium (strain LT2 / SGSC1412 / ATCC 700720)).